The sequence spans 387 residues: Putative actin-29 (387 aa).

The protein belongs to the actin family.

Its subcellular location is the cytoplasm. It is found in the cytoskeleton. The enzyme catalyses ATP + H2O = ADP + phosphate + H(+). Its function is as follows. Actins are highly conserved proteins that are involved in various types of cell motility and are ubiquitously expressed in all eukaryotic cells. Multiple isoforms are involved in various cellular functions such as cytoskeleton structure, cell mobility, chromosome movement and muscle contraction. This Dictyostelium discoideum (Social amoeba) protein is Putative actin-29 (act29).